The chain runs to 304 residues: MSERLRVQIPGLDLKNPIMPASGCFAFGIEYAELYDISKLGAIMIKAATKEARFGNPTPRVAETSSGMLNAIGLQNPGVDEIISNQLKKLEKYDVPIIANVAGSDIEDYVYVANKISKSPNVKALELNISCPNVKHGGIQFGTDPNVARNLTEKVKAVSSVPVYVKLSPNVTDIVAMAKAVETGGADGLTMINTLVGIVLDRKTGKPIIANTTGGLSGPAIRPVAIRMVYQVAQAVNIPIIGMGGVMDEWDVIDFISAGASAVAVGTANFTDPFVCPKIIDSLELALDKLGVNHILDLKGRAFR.

FMN is bound by residues Ser22 and 46–47; that span reads KA. Substrate is bound by residues Lys46 and 70–74; that span reads NAIGL. Residues Asn100 and Asn128 each coordinate FMN. Asn128 serves as a coordination point for substrate. Residue Cys131 is the Nucleophile of the active site. 2 residues coordinate FMN: Lys166 and Ile192. Residue 193–194 coordinates substrate; it reads NT. FMN-binding positions include Gly218, 244-245, and 266-267; these read GG and GT.

This sequence belongs to the dihydroorotate dehydrogenase family. Type 1 subfamily. As to quaternary structure, heterotetramer of 2 PyrK and 2 PyrD type B subunits. FMN is required as a cofactor.

The protein localises to the cytoplasm. The catalysed reaction is (S)-dihydroorotate + NAD(+) = orotate + NADH + H(+). It functions in the pathway pyrimidine metabolism; UMP biosynthesis via de novo pathway; orotate from (S)-dihydroorotate (NAD(+) route): step 1/1. Catalyzes the conversion of dihydroorotate to orotate with NAD(+) as electron acceptor. The polypeptide is Dihydroorotate dehydrogenase B (NAD(+)), catalytic subunit (pyrD) (Fusobacterium nucleatum subsp. nucleatum (strain ATCC 25586 / DSM 15643 / BCRC 10681 / CIP 101130 / JCM 8532 / KCTC 2640 / LMG 13131 / VPI 4355)).